A 159-amino-acid polypeptide reads, in one-letter code: 2-C-methyl-D-erythritol 2,4-cyclodiphosphate synthase (159 aa).

Residues D10 and H12 each coordinate a divalent metal cation. Residues 10 to 12 and 36 to 37 each bind 4-CDP-2-C-methyl-D-erythritol 2-phosphate; these read DVH and HS. H44 is a binding site for a divalent metal cation. Residues 58–60, 63–67, and R144 contribute to the 4-CDP-2-C-methyl-D-erythritol 2-phosphate site; these read DIG and FSDTD.

The protein belongs to the IspF family. In terms of assembly, homotrimer. The cofactor is a divalent metal cation.

The catalysed reaction is 4-CDP-2-C-methyl-D-erythritol 2-phosphate = 2-C-methyl-D-erythritol 2,4-cyclic diphosphate + CMP. The protein operates within isoprenoid biosynthesis; isopentenyl diphosphate biosynthesis via DXP pathway; isopentenyl diphosphate from 1-deoxy-D-xylulose 5-phosphate: step 4/6. Its function is as follows. Involved in the biosynthesis of isopentenyl diphosphate (IPP) and dimethylallyl diphosphate (DMAPP), two major building blocks of isoprenoid compounds. Catalyzes the conversion of 4-diphosphocytidyl-2-C-methyl-D-erythritol 2-phosphate (CDP-ME2P) to 2-C-methyl-D-erythritol 2,4-cyclodiphosphate (ME-CPP) with a corresponding release of cytidine 5-monophosphate (CMP). This Paraburkholderia xenovorans (strain LB400) protein is 2-C-methyl-D-erythritol 2,4-cyclodiphosphate synthase.